A 255-amino-acid polypeptide reads, in one-letter code: DNA repair protein RecO (255 aa).

Belongs to the RecO family.

Its function is as follows. Involved in DNA repair and RecF pathway recombination. This Listeria monocytogenes serotype 4a (strain HCC23) protein is DNA repair protein RecO.